Here is a 740-residue protein sequence, read N- to C-terminus: MAAFSEMGVMPEIAQAVEEMDWLLPTDIQAESIPLILGGGDVLMAAETGSGKTGAFSIPVIQIVYETLKDQQEGKKGKATIKTGASVLNKWQMNPYDRGSAFAIGSDGLCCQSREVKEWHGCRATRGLLRGKHYYEVSCHDQGLCRVGWSTMQASLDLGTDKFGFGFGGTGKKSHNKQFDNYGEEFTMHDTIGCYLDIDKGHVKFSKNGKDLGLAFEIPAHIKNQALFPACVLKNAELKFNFGEEEFKFPPKDGFVALSKAPDSYVVKSQHTGNAQVSQTKFLPNAPKALIVEPSRELAEQTLNNVKQFKKYIDNPKLRELLIIGGVAARDQLSVLDNGVDIVVGTPGRLDDLVSTGKLNLSQVRFLVLDEADGLLSQGYSDFINRMHNQIPQITSDGKRLQVIVCSATLHSFDVKKLSEKIMHFPTWVDLKGEDSVPDTVHHVVVPVNPKTDRLWERLGKNHIRTDDVHAKDNTRPGANSPEMWSEAIKILKGEYAVRAIKEHKMDQAIIFCRTKIDCDNLEQYFMQQGGGPDKKGHQFSCVCLHGDRKPHERKQNLERFKKGDVRFLICTDVAARGIDIHGVPYVINVTLPDEKQNYVHRIGRVGRAERMGLAISLVATEKEKVWYHVCSNRGKGCYNTRLKEDGGCTIWYNEMQLLSEIEEHLNCTISQVEPDIKVPVDEFDGKVTYGQKRAAGGGNYKGHVDILAPTVQELAALEKEAQTSFLHLGYLPNQLFRTF.

The tract at residues 1-295 (MAAFSEMGVM…APKALIVEPS (295 aa)) is necessary for interaction with HNRNPK. The interaction with dsRNA stretch occupies residues 1–448 (MAAFSEMGVM…DTVHHVVVPV (448 aa)). The interval 1–525 (MAAFSEMGVM…KIDCDNLEQY (525 aa)) is necessary for interaction with RELA. Residues 2–428 (AAFSEMGVMP…SEKIMHFPTW (427 aa)) enclose the Helicase ATP-binding domain. 46–53 (AETGSGKT) is a binding site for ATP. A B30.2/SPRY domain is found at 70-247 (DQQEGKKGKA…LKFNFGEEEF (178 aa)). Residues Lys-239 and Lys-268 each carry the N6-acetyllysine modification. The residue at position 281 (Lys-281) is an N6-acetyllysine; alternate. Residue Lys-281 forms a Glycyl lysine isopeptide (Lys-Gly) (interchain with G-Cter in SUMO2); alternate linkage. The short motif at 370–373 (DEAD) is the DEAD box element. At Ser-481 the chain carries Phosphoserine. Residues 493–681 (KGEYAVRAIK…QVEPDIKVPV (189 aa)) form the Helicase C-terminal domain. Residues 525–740 (YFMQQGGGPD…YLPNQLFRTF (216 aa)) form a necessary for interaction with HNRNPK region.

This sequence belongs to the DEAD box helicase family. DDX1 subfamily. Found in a multi-helicase-TICAM1 complex at least composed of DHX36, DDX1, DDX21 and TICAM1; this complex exists in resting cells with or without poly(I:C) RNA ligand stimulation. Interacts with DHX36. Interacts (via B30.2/SPRY domain) with DDX21 (via N-terminus); this interaction serves as bridges to TICAM1. Interacts with FAM98A (via N- and C-terminus). Interacts with PHF5A (via C-terminus). Interacts with MBNL1. Interacts with CSTF2. Interacts with HNRNPK. Interacts with ATM. Interacts with RELA (via C-terminus). Component of the tRNA-splicing ligase complex. Interacts with PQBP1. Interacts with ERCC6. In terms of processing, phosphorylated by ATM kinase; phosphorylation is increased in response to ionizing radiation (IR).

The protein localises to the nucleus. It is found in the cytoplasm. Its subcellular location is the cytoplasmic granule. It localises to the cytosol. The protein resides in the mitochondrion. It carries out the reaction ATP + H2O = ADP + phosphate + H(+). Acts as an ATP-dependent RNA helicase, able to unwind both RNA-RNA and RNA-DNA duplexes. Possesses 5' single-stranded RNA overhang nuclease activity. Possesses ATPase activity on various RNA, but not DNA polynucleotides. May play a role in RNA clearance at DNA double-strand breaks (DSBs), thereby facilitating the template-guided repair of transcriptionally active regions of the genome. Together with RELA, acts as a coactivator to enhance NF-kappa-B-mediated transcriptional activation. Acts as a positive transcriptional regulator of cyclin CCND2 expression. Binds to the cyclin CCND2 promoter region. Associates with chromatin at the NF-kappa-B promoter region via association with RELA. Binds to poly(A) RNA. May be involved in 3'-end cleavage and polyadenylation of pre-mRNAs. Component of the tRNA-splicing ligase complex required to facilitate the enzymatic turnover of catalytic subunit RTCB: together with archease (ZBTB8OS), acts by facilitating the guanylylation of RTCB, a key intermediate step in tRNA ligation. Component of a multi-helicase-TICAM1 complex that acts as a cytoplasmic sensor of viral double-stranded RNA (dsRNA) and plays a role in the activation of a cascade of antiviral responses including the induction of pro-inflammatory cytokines via the adapter molecule TICAM1. Specifically binds (via helicase ATP-binding domain) on both short and long poly(I:C) dsRNA. This chain is ATP-dependent RNA helicase DDX1 (Ddx1), found in Rattus norvegicus (Rat).